The following is a 434-amino-acid chain: Nicotinate phosphoribosyltransferase (434 aa).

A Phosphohistidine; by autocatalysis modification is found at His242.

It belongs to the NAPRTase family. In terms of processing, transiently phosphorylated on a His residue during the reaction cycle. Phosphorylation strongly increases the affinity for substrates and increases the rate of nicotinate D-ribonucleotide production. Dephosphorylation regenerates the low-affinity form of the enzyme, leading to product release.

The catalysed reaction is nicotinate + 5-phospho-alpha-D-ribose 1-diphosphate + ATP + H2O = nicotinate beta-D-ribonucleotide + ADP + phosphate + diphosphate. It functions in the pathway cofactor biosynthesis; NAD(+) biosynthesis; nicotinate D-ribonucleotide from nicotinate: step 1/1. In terms of biological role, catalyzes the synthesis of beta-nicotinate D-ribonucleotide from nicotinate and 5-phospho-D-ribose 1-phosphate at the expense of ATP. This is Nicotinate phosphoribosyltransferase from Sinorhizobium medicae (strain WSM419) (Ensifer medicae).